The chain runs to 217 residues: ATP-dependent Clp protease proteolytic subunit (217 aa).

Serine 119 acts as the Nucleophile in catalysis. Histidine 144 is an active-site residue.

It belongs to the peptidase S14 family. In terms of assembly, fourteen ClpP subunits assemble into 2 heptameric rings which stack back to back to give a disk-like structure with a central cavity, resembling the structure of eukaryotic proteasomes.

It is found in the cytoplasm. It catalyses the reaction Hydrolysis of proteins to small peptides in the presence of ATP and magnesium. alpha-casein is the usual test substrate. In the absence of ATP, only oligopeptides shorter than five residues are hydrolyzed (such as succinyl-Leu-Tyr-|-NHMec, and Leu-Tyr-Leu-|-Tyr-Trp, in which cleavage of the -Tyr-|-Leu- and -Tyr-|-Trp bonds also occurs).. Its function is as follows. Cleaves peptides in various proteins in a process that requires ATP hydrolysis. Has a chymotrypsin-like activity. Plays a major role in the degradation of misfolded proteins. This chain is ATP-dependent Clp protease proteolytic subunit, found in Bordetella bronchiseptica (strain ATCC BAA-588 / NCTC 13252 / RB50) (Alcaligenes bronchisepticus).